The following is a 498-amino-acid chain: ATP synthase subunit beta, chloroplastic (498 aa).

A compositionally biased stretch (polar residues) spans 1–14 (MRTNPTTSRPGVST). The disordered stretch occupies residues 1 to 20 (MRTNPTTSRPGVSTSEEKST). 172 to 179 (GGAGVGKT) contacts ATP.

It belongs to the ATPase alpha/beta chains family. F-type ATPases have 2 components, CF(1) - the catalytic core - and CF(0) - the membrane proton channel. CF(1) has five subunits: alpha(3), beta(3), gamma(1), delta(1), epsilon(1). CF(0) has four main subunits: a(1), b(1), b'(1) and c(9-12).

It localises to the plastid. Its subcellular location is the chloroplast thylakoid membrane. It carries out the reaction ATP + H2O + 4 H(+)(in) = ADP + phosphate + 5 H(+)(out). Produces ATP from ADP in the presence of a proton gradient across the membrane. The catalytic sites are hosted primarily by the beta subunits. This Hordeum vulgare (Barley) protein is ATP synthase subunit beta, chloroplastic.